The following is a 185-amino-acid chain: Elongation factor P (185 aa).

The protein belongs to the elongation factor P family.

The protein resides in the cytoplasm. It functions in the pathway protein biosynthesis; polypeptide chain elongation. In terms of biological role, involved in peptide bond synthesis. Stimulates efficient translation and peptide-bond synthesis on native or reconstituted 70S ribosomes in vitro. Probably functions indirectly by altering the affinity of the ribosome for aminoacyl-tRNA, thus increasing their reactivity as acceptors for peptidyl transferase. In Mesomycoplasma hyopneumoniae (strain J / ATCC 25934 / NCTC 10110) (Mycoplasma hyopneumoniae), this protein is Elongation factor P.